The sequence spans 269 residues: Regulatory protein RecX (269 aa).

It belongs to the RecX family.

Its subcellular location is the cytoplasm. Modulates RecA activity. The polypeptide is Regulatory protein RecX (Listeria monocytogenes serotype 4a (strain HCC23)).